We begin with the raw amino-acid sequence, 179 residues long: uncharacterized protein (179 aa).

This is an uncharacterized protein from Mushroom bacilliform virus (isolate Australia/AUS LF-1) (MBV).